We begin with the raw amino-acid sequence, 209 residues long: Thiamine-phosphate synthase (209 aa).

4-amino-2-methyl-5-(diphosphooxymethyl)pyrimidine contacts are provided by residues 35–39 (QYRDK) and asparagine 67. The Mg(2+) site is built by aspartate 68 and aspartate 86. Threonine 105 contributes to the 4-amino-2-methyl-5-(diphosphooxymethyl)pyrimidine binding site. 132-134 (SNT) lines the 2-[(2R,5Z)-2-carboxy-4-methylthiazol-5(2H)-ylidene]ethyl phosphate pocket. Lysine 135 is a binding site for 4-amino-2-methyl-5-(diphosphooxymethyl)pyrimidine. Glycine 162 contributes to the 2-[(2R,5Z)-2-carboxy-4-methylthiazol-5(2H)-ylidene]ethyl phosphate binding site.

The protein belongs to the thiamine-phosphate synthase family. Requires Mg(2+) as cofactor.

It catalyses the reaction 2-[(2R,5Z)-2-carboxy-4-methylthiazol-5(2H)-ylidene]ethyl phosphate + 4-amino-2-methyl-5-(diphosphooxymethyl)pyrimidine + 2 H(+) = thiamine phosphate + CO2 + diphosphate. It carries out the reaction 2-(2-carboxy-4-methylthiazol-5-yl)ethyl phosphate + 4-amino-2-methyl-5-(diphosphooxymethyl)pyrimidine + 2 H(+) = thiamine phosphate + CO2 + diphosphate. The enzyme catalyses 4-methyl-5-(2-phosphooxyethyl)-thiazole + 4-amino-2-methyl-5-(diphosphooxymethyl)pyrimidine + H(+) = thiamine phosphate + diphosphate. Its pathway is cofactor biosynthesis; thiamine diphosphate biosynthesis; thiamine phosphate from 4-amino-2-methyl-5-diphosphomethylpyrimidine and 4-methyl-5-(2-phosphoethyl)-thiazole: step 1/1. Its function is as follows. Condenses 4-methyl-5-(beta-hydroxyethyl)thiazole monophosphate (THZ-P) and 2-methyl-4-amino-5-hydroxymethyl pyrimidine pyrophosphate (HMP-PP) to form thiamine monophosphate (TMP). In Pseudomonas fluorescens (strain SBW25), this protein is Thiamine-phosphate synthase.